The chain runs to 190 residues: Elongation factor P-like protein (190 aa).

Belongs to the elongation factor P family.

This is Elongation factor P-like protein from Klebsiella pneumoniae (strain 342).